A 74-amino-acid chain; its full sequence is Conotoxin Vi15a (74 aa).

An N-terminal signal peptide occupies residues 1 to 19 (MMPVILLLLLSLAIRCADG). Positions 20–43 (KAVQGDSDPSASLLTGDKNHDLPV) are excised as a propeptide. Trp-72 is modified (tryptophan amide).

In terms of processing, contains four disulfide bonds. As to expression, expressed by the venom duct.

Its subcellular location is the secreted. The sequence is that of Conotoxin Vi15a from Conus virgo (Virgin cone).